The sequence spans 125 residues: Small ribosomal subunit protein eS6 (125 aa).

Belongs to the eukaryotic ribosomal protein eS6 family. As to quaternary structure, part of the 30S ribosomal subunit.

This chain is Small ribosomal subunit protein eS6, found in Thermococcus kodakarensis (strain ATCC BAA-918 / JCM 12380 / KOD1) (Pyrococcus kodakaraensis (strain KOD1)).